Here is a 520-residue protein sequence, read N- to C-terminus: ATP-dependent RNA helicase CshA (520 aa).

A Q motif motif is present at residues 2 to 30; it reads TKFSEFGLDEKIVKSVNRMGFEEATPIQE. Residues 33-203 enclose the Helicase ATP-binding domain; it reads IPLGLEGKDL…ERFMHSPELI (171 aa). Position 46–53 (46–53) interacts with ATP; it reads AQTGTGKT. Residues 151–154 carry the DEAD box motif; that stretch reads DEAD. Residues 214 to 374 enclose the Helicase C-terminal domain; sequence LIEQFFVKVH…PLQAPTWDEA (161 aa). Residues 428-439 are compositionally biased toward basic and acidic residues; it reads KTPVHITEERPL. The disordered stretch occupies residues 428–520; it reads KTPVHITEER…NKGNYSQKSK (93 aa). 2 stretches are compositionally biased toward gly residues: residues 442–468 and 482–496; these read RGGG…GKGG and SGGG…GGGG.

Belongs to the DEAD box helicase family. CshA subfamily. Oligomerizes, may be a member of the RNA degradosome.

It localises to the cytoplasm. It catalyses the reaction ATP + H2O = ADP + phosphate + H(+). DEAD-box RNA helicase possibly involved in RNA degradation. Unwinds dsRNA in both 5'- and 3'-directions, has RNA-dependent ATPase activity. Involved in cold tolerance, motility and alcohol tolerance. The chain is ATP-dependent RNA helicase CshA from Listeria monocytogenes serovar 1/2a (strain ATCC BAA-679 / EGD-e).